We begin with the raw amino-acid sequence, 206 residues long: Recombination protein RecR (206 aa).

Residues 58 to 73 (CENCHNISDVAVCEIC) form a C4-type zinc finger. A Toprim domain is found at 81–176 (QIVCVVEDVR…ITSSIARGIS (96 aa)).

The protein belongs to the RecR family.

Its function is as follows. May play a role in DNA repair. It seems to be involved in an RecBC-independent recombinational process of DNA repair. It may act with RecF and RecO. This is Recombination protein RecR from Flavobacterium psychrophilum (strain ATCC 49511 / DSM 21280 / CIP 103535 / JIP02/86).